The chain runs to 926 residues: MASAVRGSRPWPRLGLQLQFAALLLGTLSPQVHTLRPENLLLVSTLDGSLHALSKQTGDLKWTLRDDPVIEGPMYVTEMAFLSDPADGSLYILGTQKQQGLMKLPFTIPELVHASPCRSSDGVFYTGRKQDAWFVVDPESGETQMTLTTEGPSTPRLYIGRTQYTVTMHDPRAPALRWNTTYRRYSAPPMDGSPGKYMSHLASCGMGLLLTVDPGSGTVLWTQDLGVPVMGVYTWHQDGLRQLPHLTLARDTLHFLALRWGHIRLPASGPRDTATLFSTLDTQLLMTLYVGKDETGFYVSKALVHTGVALVPRGLTLAPADGPTTDEVTLQVSGEREGSPSTAVRYPSGSVALPSQWLLIGHHELPPVLHTTMLRVHPTLGSGTAETRPPENTQAPAFFLELLSLSREKLWDSELHPEEKTPDSYLGLGPQDLLAASLTAVLLGGWILFVMRQQQPQVVEKQQETPLAPADFAHISQDAQSLHSGASRRSQKRLQSPSKQAQPLDDPEAEQLTVVGKISFNPKDVLGRGAGGTFVFRGQFEGRAVAVKRLLRECFGLVRREVQLLQESDRHPNVLRYFCTERGPQFHYIALELCRASLQEYVENPDLDRGGLEPEVVLQQLMSGLAHLHSLHIVHRDLKPGNILITGPDSQGLGRVVLSDFGLCKKLPAGRCSFSLHSGIPGTEGWMAPELLQLLPPDSPTSAVDIFSAGCVFYYVLSGGSHPFGDSLYRQANILTGAPCLAHLEEEVHDKVVARDLVGAMLSPLPQPRPSAPQVLAHPFFWSRAKQLQFFQDVSDWLEKESEQEPLVRALEAGGCAVVRDNWHEHISMPLQTDLRKFRSYKGTSVRDLLRAVRNKKHHYRELPVEVRQALGQVPDGFVQYFTNRFPRLLLHTHRAMRSCASESLFLPYYPPDSEARRPCPGATGR.

Residues 1–34 (MASAVRGSRPWPRLGLQLQFAALLLGTLSPQVHT) form the signal peptide. At 35–430 (LRPENLLLVS…TPDSYLGLGP (396 aa)) the chain is on the lumenal side. The chain crosses the membrane as a helical span at residues 431-451 (QDLLAASLTAVLLGGWILFVM). Residues 452–926 (RQQQPQVVEK…RRPCPGATGR (475 aa)) are Cytoplasmic-facing. Polar residues predominate over residues 478–501 (DAQSLHSGASRRSQKRLQSPSKQA). The tract at residues 478 to 509 (DAQSLHSGASRRSQKRLQSPSKQAQPLDDPEA) is disordered. The region spanning 520 to 781 (FNPKDVLGRG…APQVLAHPFF (262 aa)) is the Protein kinase domain. ATP contacts are provided by residues 526-534 (LGRGAGGTF) and Lys-548. The active-site Proton acceptor is the Asp-637. The region spanning 784–912 (RAKQLQFFQD…ESLFLPYYPP (129 aa)) is the KEN domain.

This sequence belongs to the protein kinase superfamily. Ser/Thr protein kinase family. Mg(2+) is required as a cofactor. Autophosphorylated.

The protein resides in the endoplasmic reticulum membrane. It catalyses the reaction L-seryl-[protein] + ATP = O-phospho-L-seryl-[protein] + ADP + H(+). The enzyme catalyses L-threonyl-[protein] + ATP = O-phospho-L-threonyl-[protein] + ADP + H(+). With respect to regulation, the kinase domain is activated by trans-autophosphorylation. Kinase activity is required for activation of the endoribonuclease domain. In terms of biological role, induces translational repression through 28S ribosomal RNA cleavage in response to ER stress. Pro-apoptotic. Appears to play no role in the unfolded-protein response, unlike closely related proteins. This chain is Serine/threonine-protein kinase/endoribonuclease IRE2, found in Homo sapiens (Human).